Here is a 197-residue protein sequence, read N- to C-terminus: Dermorphin-1 (197 aa).

Positions 1-20 are cleaved as a signal peptide; it reads MSFLKKSLLLILFLGLVSLS. The propeptide occupies 21-45; that stretch reads VCKEEKRETEEENENEENHEEGSEM. Residues 24 to 197 are disordered; it reads EEKRETEEEN…GYPSGEAKKM (174 aa). Residues 30–39 are compositionally biased toward acidic residues; sequence EEENENEENH. Positions 40-62 are enriched in basic and acidic residues; that stretch reads EEGSEMKRYMFHLMDGEAKKRDS. Methionine 49 carries the post-translational modification D-methionine. Aspartate 54 bears the Aspartic acid 1-amide mark. Positions 56–77 are excised as a propeptide; sequence EAKKRDSEENEIEENHEEGSEM. At alanine 81 the chain carries D-alanine (Ala). The residue at position 86 (serine 86) is a Serine amide. Over residues 88–97 the composition is skewed to basic and acidic residues; it reads EAKKIKRVSE. A propeptide spanning residues 88-112 is cleaved from the precursor; that stretch reads EAKKIKRVSEEENENEENHEEGSEM. D-alanine (Ala) is present on alanine 116. Serine 121 is modified (serine amide). Residues 123–132 show a composition bias toward basic and acidic residues; it reads EAKKIKRESE. A propeptide spanning residues 123–147 is cleaved from the precursor; the sequence is EAKKIKRESEEEKEIEENHEEGSEM. Alanine 151 carries the post-translational modification D-alanine (Ala). Position 156 is a serine amide (serine 156). A propeptide spanning residues 158-182 is cleaved from the precursor; that stretch reads EAKKIKRESEEENENEENHEEGSEM. Acidic residues predominate over residues 167 to 176; it reads EEENENEENH. Residue alanine 186 is modified to D-alanine (Ala). Serine amide is present on serine 191. The propeptide occupies 193–197; the sequence is EAKKM.

The protein belongs to the frog skin active peptide (FSAP) family. Dermorphin subfamily. Expressed by the skin glands.

Its subcellular location is the secreted. Dermorphin has a very potent opiate-like activity. It has high affinity and selectivity for mu-type opioid receptors. Its function is as follows. Deltorphin has a very potent opiate-like activity. It has high affinity and selectivity for delta-type opioid receptors. This Phyllomedusa sauvagei (Sauvage's leaf frog) protein is Dermorphin-1.